Reading from the N-terminus, the 192-residue chain is MAKRKKSNLQWIKETLDLKPDHRWEAPDGYRIFVANRGAVRFNVPQDWFFEPQEKSFKFSDKKPPKDDCALEVSFNQLPPNDWTLFPLKSTLRKVVEDDGRDVIEKGEIISLKRQTAKIVWTELKFIDTQEEPREAFSRICIGLGSNVQCLITFEFWADQAEQMTPVWDEVMRSLTLGLYIRDPSTGLAFPD.

This is an uncharacterized protein from Nostoc sp. (strain PCC 7120 / SAG 25.82 / UTEX 2576).